The sequence spans 103 residues: Small ribosomal subunit protein uS10 (103 aa).

Belongs to the universal ribosomal protein uS10 family. As to quaternary structure, part of the 30S ribosomal subunit.

In terms of biological role, involved in the binding of tRNA to the ribosomes. The sequence is that of Small ribosomal subunit protein uS10 from Alteromonas mediterranea (strain DSM 17117 / CIP 110805 / LMG 28347 / Deep ecotype).